Here is a 270-residue protein sequence, read N- to C-terminus: Tetraspanin-14 (270 aa).

Topologically, residues Met1–Tyr17 are cytoplasmic. Residues Leu18–Leu38 traverse the membrane as a helical segment. The Extracellular segment spans residues Trp39–Pro61. A helical membrane pass occupies residues Val62–Gly82. The Cytoplasmic segment spans residues Ala83–Lys92. Residues Phe93–Phe113 form a helical membrane-spanning segment. Topologically, residues Leu114–Asn232 are extracellular. The segment at Leu114–Asn232 is necessary and sufficient for interaction with ADAM10. Disulfide bonds link Cys153/Cys221, Cys154/Cys186, Cys170/Cys180, and Cys187/Cys200. An N-linked (GlcNAc...) asparagine glycan is attached at Asn169. Residues Ile233–Leu253 traverse the membrane as a helical segment. Over Ala254–Phe270 the chain is Cytoplasmic.

The protein belongs to the tetraspanin (TM4SF) family. In terms of assembly, interacts with ADAM10; the interaction promotes ADAM10 maturation and cell surface expression.

The protein localises to the cell membrane. Part of TspanC8 subgroup, composed of 6 members that interact with the transmembrane metalloprotease ADAM10. This interaction is required for ADAM10 exit from the endoplasmic reticulum and for enzymatic maturation and trafficking to the cell surface as well as substrate specificity. Different TspanC8/ADAM10 complexes have distinct substrates. Negatively regulates ADAM10-mediated cleavage of GP6. Promotes ADAM10-mediated cleavage of CDH5. The polypeptide is Tetraspanin-14 (Tspan14) (Mus musculus (Mouse)).